A 210-amino-acid polypeptide reads, in one-letter code: Signal peptidase complex catalytic subunit SEC11 (210 aa).

Topologically, residues 1–21 (MLAGLSPHLSNLRRSLTQVLN) are cytoplasmic. The chain crosses the membrane as a helical; Signal-anchor for type II membrane protein span at residues 22 to 38 (FALVLSTAFMMWKGLSI). At 39–210 (YTNSSSPIVV…MGAMVILQRE (172 aa)) the chain is on the lumenal side. An N-linked (GlcNAc...) asparagine glycan is attached at N41. Residues S53, H92, and D152 each act as charge relay system in the active site. The segment at 196 to 207 (VLLGIMGAMVIL) is C-terminal short (CTS) helix.

It belongs to the peptidase S26B family. Component of the signal peptidase complex (SPC) composed of a catalytic subunit SEC11 and three accessory subunits SPC1, SPC2 and SPC3. The complex induces a local thinning of the ER membrane which is used to measure the length of the signal peptide (SP) h-region of protein substrates. This ensures the selectivity of the complex towards h-regions shorter than 18-20 amino acids. SPC associates with the translocon complex.

The protein localises to the endoplasmic reticulum membrane. It catalyses the reaction Cleavage of hydrophobic, N-terminal signal or leader sequences from secreted and periplasmic proteins.. Its function is as follows. Catalytic component of the signal peptidase complex (SPC) which catalyzes the cleavage of N-terminal signal sequences from nascent proteins as they are translocated into the lumen of the endoplasmic reticulum. Specifically cleaves N-terminal signal peptides that contain a hydrophobic alpha-helix (h-region) shorter than 18-20 amino acids. The polypeptide is Signal peptidase complex catalytic subunit SEC11 (SEC11) (Coccidioides posadasii (strain RMSCC 757 / Silveira) (Valley fever fungus)).